The sequence spans 715 residues: Polyribonucleotide nucleotidyltransferase (715 aa).

Residues Asp-493 and Asp-499 each coordinate Mg(2+). The 60-residue stretch at 560 to 619 folds into the KH domain; that stretch reads PRMITIKINPEKIRDVIGKGGSVIRALTEETGTTIDISDDGVVTIASTSSEGMAEAKKRI. The region spanning 629 to 697 is the S1 motif domain; the sequence is GQVYEGTVLK…EKGRVRLSAK (69 aa).

This sequence belongs to the polyribonucleotide nucleotidyltransferase family. It depends on Mg(2+) as a cofactor.

It is found in the cytoplasm. The enzyme catalyses RNA(n+1) + phosphate = RNA(n) + a ribonucleoside 5'-diphosphate. Involved in mRNA degradation. Catalyzes the phosphorolysis of single-stranded polyribonucleotides processively in the 3'- to 5'-direction. This is Polyribonucleotide nucleotidyltransferase from Burkholderia multivorans (strain ATCC 17616 / 249).